The chain runs to 319 residues: 4-diphosphocytidyl-2-C-methyl-D-erythritol kinase (319 aa).

Lys-21 is an active-site residue. 106-116 contacts ATP; that stretch reads PIGAGLAGGSS. The active site involves Asp-148.

It belongs to the GHMP kinase family. IspE subfamily.

It carries out the reaction 4-CDP-2-C-methyl-D-erythritol + ATP = 4-CDP-2-C-methyl-D-erythritol 2-phosphate + ADP + H(+). Its pathway is isoprenoid biosynthesis; isopentenyl diphosphate biosynthesis via DXP pathway; isopentenyl diphosphate from 1-deoxy-D-xylulose 5-phosphate: step 3/6. Catalyzes the phosphorylation of the position 2 hydroxy group of 4-diphosphocytidyl-2C-methyl-D-erythritol. The polypeptide is 4-diphosphocytidyl-2-C-methyl-D-erythritol kinase (Prochlorococcus marinus (strain MIT 9313)).